The sequence spans 64 residues: Large ribosomal subunit protein bL35 (64 aa).

Belongs to the bacterial ribosomal protein bL35 family.

The sequence is that of Large ribosomal subunit protein bL35 from Pseudomonas entomophila (strain L48).